A 644-amino-acid polypeptide reads, in one-letter code: DNA mismatch repair protein MutL (644 aa).

The protein belongs to the DNA mismatch repair MutL/HexB family.

In terms of biological role, this protein is involved in the repair of mismatches in DNA. It is required for dam-dependent methyl-directed DNA mismatch repair. May act as a 'molecular matchmaker', a protein that promotes the formation of a stable complex between two or more DNA-binding proteins in an ATP-dependent manner without itself being part of a final effector complex. The polypeptide is DNA mismatch repair protein MutL (Chlorobium chlorochromatii (strain CaD3)).